A 205-amino-acid polypeptide reads, in one-letter code: Large ribosomal subunit protein uL3 (205 aa).

Belongs to the universal ribosomal protein uL3 family. Part of the 50S ribosomal subunit. Forms a cluster with proteins L14 and L19.

Functionally, one of the primary rRNA binding proteins, it binds directly near the 3'-end of the 23S rRNA, where it nucleates assembly of the 50S subunit. The chain is Large ribosomal subunit protein uL3 from Bacteroides fragilis (strain ATCC 25285 / DSM 2151 / CCUG 4856 / JCM 11019 / LMG 10263 / NCTC 9343 / Onslow / VPI 2553 / EN-2).